We begin with the raw amino-acid sequence, 630 residues long: Glutathione hydrolase proenzyme 1 (630 aa).

The Cytoplasmic segment spans residues 1–49 (MGINTSSAQSSGAASIARSSVNVKSGNRHLSSNKKSATSALEERASRPS). Residues 50–70 (ILVTFLVLAGTILSLYIWPIL) form a helical; Signal-anchor for type II membrane protein membrane-spanning segment. Topologically, residues 71 to 630 (SPDLFFANQR…SRKQAVAAAY (560 aa)) are lumenal. An N-linked (GlcNAc...) asparagine glycan is attached at N156. R165 is a binding site for L-glutamate. N-linked (GlcNAc...) asparagine glycans are attached at residues N180, N315, N397, and N417. Residue T441 is the Nucleophile of the active site. L-glutamate contacts are provided by residues S459, N461, D483, 511-512 (SS), and 532-533 (GG). A glycan (N-linked (GlcNAc...) asparagine) is linked at N612.

This sequence belongs to the gamma-glutamyltransferase family. As to quaternary structure, heterodimer composed of the light and heavy chains. The active site is located in the light chain. Cleaved by autocatalysis into a large and a small subunit.

The protein localises to the endoplasmic reticulum membrane. The enzyme catalyses an N-terminal (5-L-glutamyl)-[peptide] + an alpha-amino acid = 5-L-glutamyl amino acid + an N-terminal L-alpha-aminoacyl-[peptide]. It catalyses the reaction glutathione + H2O = L-cysteinylglycine + L-glutamate. The catalysed reaction is an S-substituted glutathione + H2O = an S-substituted L-cysteinylglycine + L-glutamate. Its pathway is sulfur metabolism; glutathione metabolism. In terms of biological role, catalyzes the transfer of the gamma-glutamyl moiety of glutathione (GSH) and other gamma-glutamyl compounds to amino acids and peptides. Major GSH-degrading enzyme, catalyzing the hydrolytic release of L-glutamate from GSH. In Schizosaccharomyces pombe (strain 972 / ATCC 24843) (Fission yeast), this protein is Glutathione hydrolase proenzyme 1 (ggt1).